Here is a 78-residue protein sequence, read N- to C-terminus: RNA-binding protein KhpA (78 aa).

One can recognise a KH domain in the interval 29–78 (TIIYELSVAKPDIGKIIGKEGRTIKAIRTLLVSVASRNNVRVSLEIMEEK).

It belongs to the KhpA RNA-binding protein family.

It localises to the cytoplasm. A probable RNA-binding protein. This is RNA-binding protein KhpA from Chlamydia pneumoniae (Chlamydophila pneumoniae).